Reading from the N-terminus, the 263-residue chain is Ribosome maturation factor RimP (263 aa).

Positions 192 to 263 (EREMKRDLGI…RGEIDPIEGE (72 aa)) are disordered. The span at 217–231 (PARRNAPKPKLKSTA) shows a compositional bias: basic residues. The span at 232–257 (KAHEKKPPKNTKEHRLAAERLRRGEI) shows a compositional bias: basic and acidic residues.

Belongs to the RimP family.

Its subcellular location is the cytoplasm. Functionally, required for maturation of 30S ribosomal subunits. The polypeptide is Ribosome maturation factor RimP (Nitrobacter hamburgensis (strain DSM 10229 / NCIMB 13809 / X14)).